The primary structure comprises 217 residues: Large ribosomal subunit protein uL3 (217 aa).

Positions 134 to 146 are enriched in polar residues; it reads GRATHGNSRSHNV. The disordered stretch occupies residues 134 to 154; the sequence is GRATHGNSRSHNVPGSIGMAQ. Gln-154 carries the N5-methylglutamine modification.

It belongs to the universal ribosomal protein uL3 family. In terms of assembly, part of the 50S ribosomal subunit. Forms a cluster with proteins L14 and L19. Post-translationally, methylated by PrmB.

Its function is as follows. One of the primary rRNA binding proteins, it binds directly near the 3'-end of the 23S rRNA, where it nucleates assembly of the 50S subunit. The chain is Large ribosomal subunit protein uL3 from Burkholderia cenocepacia (strain HI2424).